Reading from the N-terminus, the 384-residue chain is MFPERGASEEEVLRELEEKTREDLTFDSGKILGSMCTYPHPFAVKVVMKYIDRNLGDPGLHIGSQKIEKEAVDMLANLLGLEKGYGHIVSGGTEANILAVRAMRNLAGIEKPELILPESAHFSFIKAAEMLGVKLVWAELNDDYTVNVKDVEKKITDRTIGIVGIAGTTGLGVVDDIPALSDLALDYGLPLHVDAAFGGFVIPFAKALGYEIPDFDFRLKGVKSITIDPHKMGMVPIPAGGIIFREKKFLDSISVLAPYLAGGKIWQATITGTRPGANALAVWAMIKHLGFDGYKEVVKEKMELARWFASELKKIPGIYLIREPVLNIVSFGSEKLEELEKELKARGWGVSAHRGYIRIVVMPHVKREHLEEFLRDLREIAKRL.

The residue at position 231 (K231) is an N6-(pyridoxal phosphate)lysine.

Belongs to the group II decarboxylase family. MfnA subfamily. As to quaternary structure, homodimer. Can also form homohexamers. Pyridoxal 5'-phosphate serves as cofactor.

It carries out the reaction L-aspartate + H(+) = beta-alanine + CO2. The protein operates within cofactor biosynthesis; coenzyme A biosynthesis. Its activity is regulated as follows. Inhibited by hydroxylamine. Catalyzes the decarboxylation of L-aspartate to produce beta-alanine. In vitro, can also catalyze the decarboxylation of L-glutamate to produce 4-aminobutanoate, but this activity does not seem necessary in vivo. Shows much higher activity with L-aspartate than with L-glutamate. Does not decarboxylate L-tyrosine. The polypeptide is L-aspartate decarboxylase (Thermococcus kodakarensis (strain ATCC BAA-918 / JCM 12380 / KOD1) (Pyrococcus kodakaraensis (strain KOD1))).